Consider the following 388-residue polypeptide: S-adenosylmethionine synthase (388 aa).

Residue histidine 16 coordinates ATP. Aspartate 18 is a Mg(2+) binding site. Position 44 (glutamate 44) interacts with K(+). Residues glutamate 57 and glutamine 100 each contribute to the L-methionine site. The flexible loop stretch occupies residues 100–110 (QSADIAQGVNE). ATP-binding positions include 167-169 (DAK), 233-234 (RF), aspartate 242, 248-249 (RK), alanine 265, and lysine 269. Aspartate 242 contacts L-methionine. Lysine 273 contacts L-methionine.

It belongs to the AdoMet synthase family. Homotetramer; dimer of dimers. Mg(2+) serves as cofactor. The cofactor is K(+).

Its subcellular location is the cytoplasm. The catalysed reaction is L-methionine + ATP + H2O = S-adenosyl-L-methionine + phosphate + diphosphate. Its pathway is amino-acid biosynthesis; S-adenosyl-L-methionine biosynthesis; S-adenosyl-L-methionine from L-methionine: step 1/1. Its function is as follows. Catalyzes the formation of S-adenosylmethionine (AdoMet) from methionine and ATP. The overall synthetic reaction is composed of two sequential steps, AdoMet formation and the subsequent tripolyphosphate hydrolysis which occurs prior to release of AdoMet from the enzyme. This chain is S-adenosylmethionine synthase, found in Aromatoleum aromaticum (strain DSM 19018 / LMG 30748 / EbN1) (Azoarcus sp. (strain EbN1)).